The sequence spans 186 residues: Protein GrpE (186 aa).

Basic and acidic residues-rich tracts occupy residues 1 to 13 and 23 to 34; these read MSDN…EEQH and EETHQAEDAVEH. Residues 1-34 are disordered; it reads MSDNKTELNEEQHNATAEGEVSEETHQAEDAVEH.

It belongs to the GrpE family. As to quaternary structure, homodimer.

It is found in the cytoplasm. Functionally, participates actively in the response to hyperosmotic and heat shock by preventing the aggregation of stress-denatured proteins, in association with DnaK and GrpE. It is the nucleotide exchange factor for DnaK and may function as a thermosensor. Unfolded proteins bind initially to DnaJ; upon interaction with the DnaJ-bound protein, DnaK hydrolyzes its bound ATP, resulting in the formation of a stable complex. GrpE releases ADP from DnaK; ATP binding to DnaK triggers the release of the substrate protein, thus completing the reaction cycle. Several rounds of ATP-dependent interactions between DnaJ, DnaK and GrpE are required for fully efficient folding. The chain is Protein GrpE from Hydrogenovibrio crunogenus (strain DSM 25203 / XCL-2) (Thiomicrospira crunogena).